A 299-amino-acid chain; its full sequence is 4-hydroxybenzoate octaprenyltransferase (299 aa).

7 helical membrane-spanning segments follow: residues 31–51 (IGIYLVLWPTLWSLWIAADGL), 54–74 (WDVLVIFVLGVVLMRSAGCVI), 105–125 (VLFFVALLVIAFILVLFTNPL), 148–168 (QLPQIVLGAAFAWSIPMAFAA), 177–197 (IWVLYTAVVLWTVAYDTFYAM), 241–261 (FGLGFSFKVSLLVAGGLFAYQ), and 277–297 (FLHNNWVGLVVFLGILVDKLI).

Belongs to the UbiA prenyltransferase family. The cofactor is Mg(2+).

It is found in the cell inner membrane. It catalyses the reaction all-trans-octaprenyl diphosphate + 4-hydroxybenzoate = 4-hydroxy-3-(all-trans-octaprenyl)benzoate + diphosphate. It participates in cofactor biosynthesis; ubiquinone biosynthesis. Catalyzes the prenylation of para-hydroxybenzoate (PHB) with an all-trans polyprenyl group. Mediates the second step in the final reaction sequence of ubiquinone-8 (UQ-8) biosynthesis, which is the condensation of the polyisoprenoid side chain with PHB, generating the first membrane-bound Q intermediate 3-octaprenyl-4-hydroxybenzoate. This chain is 4-hydroxybenzoate octaprenyltransferase, found in Saccharophagus degradans (strain 2-40 / ATCC 43961 / DSM 17024).